A 414-amino-acid chain; its full sequence is Enterobactin exporter EntS (414 aa).

Over 1–21 (MNRQSWLLNLSLLKTHPAFRA) the chain is Cytoplasmic. A helical membrane pass occupies residues 22-42 (VFLARFISIVSLGLLGVAVPV). Over 43 to 55 (QIQMMTHSTWQVG) the chain is Periplasmic. Residues 56–76 (LSVTLTGGAMFIGLMVGGVLA) traverse the membrane as a helical segment. The Cytoplasmic portion of the chain corresponds to 77–83 (DRYERKK). A helical transmembrane segment spans residues 84–104 (VILLARGTCGIGFIGLCVNAL). Over 105–109 (LPEPS) the chain is Periplasmic. The chain crosses the membrane as a helical span at residues 110–130 (LLAIYLLGLWDGFFASLGVTA). The Cytoplasmic portion of the chain corresponds to 131–156 (LLAATPALVGRENLMQAGAITMLTVR). A helical transmembrane segment spans residues 157–177 (LGSVISPMLGGILLASGGVAW). Residue asparagine 178 is a topological domain, periplasmic. The helical transmembrane segment at 179–199 (YGLAAAGTFITLLPLLTLPRL) threads the bilayer. The Cytoplasmic portion of the chain corresponds to 200–218 (PVPPQPRENPFLALLAAFR). The helical transmembrane segment at 219 to 239 (FLLACPLIGGIALLGGLVTMA) threads the bilayer. At 240–256 (SAVRVLYPALAMSWQMS) the chain is on the periplasmic side. The helical transmembrane segment at 257–277 (AAQIGLLYAAIPLGAAIGALT) threads the bilayer. The Cytoplasmic portion of the chain corresponds to 278 to 287 (SGQLAHSVRP). Residues 288–307 (GLIMLVSTVGSFLAVGLFAI) traverse the membrane as a helical segment. Topologically, residues 308–313 (MPVWIA) are periplasmic. Residues 314 to 336 (GVICLALFGWLSAISSLLQYTLL) traverse the membrane as a helical segment. At 337–356 (QTQTPENMLGRMNGLWTAQN) the chain is on the cytoplasmic side. The chain crosses the membrane as a helical span at residues 357-377 (VTGDAIGAALLGGLGAMMTPV). Alanine 378 is a topological domain (periplasmic). A helical transmembrane segment spans residues 379 to 399 (SASVSGFGLVIIGLLLLLVLG). Over 400 to 414 (ELRRFRQTSPVSDAG) the chain is Cytoplasmic.

Belongs to the major facilitator superfamily. EntS (TC 2.A.1.38) family.

It localises to the cell inner membrane. Its function is as follows. Component of an export pathway for enterobactin. This Salmonella paratyphi A (strain ATCC 9150 / SARB42) protein is Enterobactin exporter EntS.